A 352-amino-acid chain; its full sequence is Ion-translocating oxidoreductase complex subunit D (352 aa).

5 helical membrane-spanning segments follow: residues 20–40, 42–62, 78–109, 123–143, and 148–168; these read IMLL…RFFG, GTLV…ALVL, ALLT…VIIA, PAMI…TSWL, and IAVN…GHTA. Position 187 is an FMN phosphoryl threonine (Thr187). The next 4 membrane-spanning stretches (helical) occupy residues 214–234, 242–262, 267–287, and 301–318; these read ILAG…GVWL, WHIP…GWLF, LAAP…FFIL, and LMFG…RSFG.

It belongs to the NqrB/RnfD family. In terms of assembly, the complex is composed of six subunits: RsxA, RsxB, RsxC, RsxD, RsxE and RsxG. The cofactor is FMN.

The protein resides in the cell inner membrane. Its function is as follows. Part of a membrane-bound complex that couples electron transfer with translocation of ions across the membrane. Required to maintain the reduced state of SoxR. The chain is Ion-translocating oxidoreductase complex subunit D from Shigella flexneri.